The chain runs to 85 residues: Beta-insect depressant toxin Lqh-dprIT3a (85 aa).

The first 21 residues, 1-21 (MKLLLLLTISASMLIEGLVNA), serve as a signal peptide directing secretion. Residues 22–82 (DGYIRGGDGC…EWDYETNTCG (61 aa)) enclose the LCN-type CS-alpha/beta domain. 4 disulfides stabilise this stretch: C31-C81, C35-C56, C42-C63, and C46-C65. Position 82 is a glycine amide (G82).

This sequence belongs to the long (4 C-C) scorpion toxin superfamily. Sodium channel inhibitor family. Beta subfamily. As to expression, expressed by the venom gland.

It is found in the secreted. Depressant insect beta-toxins cause a transient contraction paralysis followed by a slow flaccid paralysis. They bind voltage-independently at site-4 of sodium channels (Nav) and block action potentials, primarily by depolarizing the axonal membrane and suppressing the sodium current. This depressant toxin is active only on insects. It is found in a relatively small amount in the venom, and its activity on insects is 10-fold higher compared to other known depressant toxins. The protein is Beta-insect depressant toxin Lqh-dprIT3a of Leiurus hebraeus (Hebrew deathstalker scorpion).